We begin with the raw amino-acid sequence, 559 residues long: Glucose-6-phosphate isomerase (559 aa).

The active-site Proton donor is Glu-363. Active-site residues include His-394 and Lys-523.

The protein belongs to the GPI family.

Its subcellular location is the cytoplasm. It carries out the reaction alpha-D-glucose 6-phosphate = beta-D-fructose 6-phosphate. It functions in the pathway carbohydrate biosynthesis; gluconeogenesis. It participates in carbohydrate degradation; glycolysis; D-glyceraldehyde 3-phosphate and glycerone phosphate from D-glucose: step 2/4. Functionally, catalyzes the reversible isomerization of glucose-6-phosphate to fructose-6-phosphate. The protein is Glucose-6-phosphate isomerase of Bartonella henselae (strain ATCC 49882 / DSM 28221 / CCUG 30454 / Houston 1) (Rochalimaea henselae).